The following is a 399-amino-acid chain: Stearoyl-[acyl-carrier-protein] 9-desaturase, chloroplastic (399 aa).

Residues 1-12 show a composition bias toward polar residues; it reads MALNLNPVSTPF. The transit peptide at 1–35 directs the protein to the chloroplast; that stretch reads MALNLNPVSTPFQCRRLPSFSPRQTPSRRSPKFFM. The segment at 1–57 is disordered; that stretch reads MALNLNPVSTPFQCRRLPSFSPRQTPSRRSPKFFMASTLSSSSPKEAESLKKPFSPP. Positions 141, 179, 182, 232, 265, and 268 each coordinate Fe cation.

Belongs to the fatty acid desaturase type 2 family. As to quaternary structure, homodimer. It depends on Fe(2+) as a cofactor.

It localises to the plastid. The protein resides in the chloroplast. The catalysed reaction is octadecanoyl-[ACP] + 2 reduced [2Fe-2S]-[ferredoxin] + O2 + 2 H(+) = (9Z)-octadecenoyl-[ACP] + 2 oxidized [2Fe-2S]-[ferredoxin] + 2 H2O. It functions in the pathway lipid metabolism; fatty acid metabolism. Functionally, converts stearoyl-ACP to oleoyl-ACP by introduction of a cis double bond between carbons 9 and 10 of the acyl chain. This is Stearoyl-[acyl-carrier-protein] 9-desaturase, chloroplastic from Spinacia oleracea (Spinach).